The following is a 144-amino-acid chain: Large ribosomal subunit protein uL15 (144 aa).

The interval 1–58 (MKLNTLSPAAGAKHAAKRVGRGIGSGLGKTAGRGHKGQKSRSGGSIRPGFEGGQMPLK) is disordered. Positions 21-31 (RGIGSGLGKTA) are enriched in gly residues.

This sequence belongs to the universal ribosomal protein uL15 family. Part of the 50S ribosomal subunit.

In terms of biological role, binds to the 23S rRNA. The polypeptide is Large ribosomal subunit protein uL15 (Psychromonas ingrahamii (strain DSM 17664 / CCUG 51855 / 37)).